Here is a 585-residue protein sequence, read N- to C-terminus: Suppressor of mec-8 and unc-52 protein homolog 2 (585 aa).

Residues 1–14 are compositionally biased toward basic residues; sequence MKPSKSHHKEKTAR. Disordered regions lie at residues 1–52 and 219–324; these read MKPS…SSFH and KKKK…PRDK. Positions 15–39 are enriched in basic and acidic residues; it reads RREEKLEESDNPKYRDRAKERRENQ. 4 R-[ED] repeats span residues 16 to 17, 29 to 30, 36 to 37, and 258 to 259; these read RE and RD. The span at 276–288 shows a compositional bias: basic and acidic residues; sequence LSTKQEEPPVART. R-[ED] repeat units follow at residues 322-323, 436-437, 445-446, 450-451, 540-541, and 542-543; these read RD and RE. The tract at residues 523–585 is disordered; that stretch reads FQFGVKMQDG…EAQTPKRSKH (63 aa). The span at 530–548 shows a compositional bias: basic and acidic residues; the sequence is QDGRKTRKQNRDRDQKLNN. Threonine 579 is modified (phosphothreonine).

This sequence belongs to the RED family. As to quaternary structure, component of the spliceosome. Interacts with SMU1. As to expression, highly expressed in seedlings at 7 days after germination, young flowers before anthesis and developing siliques. Expressed at lower levels in roots, expanding leaves, open flowers, dry seeds and inflorescences. Not detected in senescing leaves.

It is found in the nucleus. Its function is as follows. Auxiliary spliceosomal protein involved in splicing of specific pre-mRNAs that affect multiple aspects of development. This chain is Suppressor of mec-8 and unc-52 protein homolog 2 (SMU2), found in Arabidopsis thaliana (Mouse-ear cress).